Reading from the N-terminus, the 1279-residue chain is Photoreceptor cilium actin regulator (1279 aa).

Residue Gly-2 is the site of N-myristoyl glycine attachment. Cys-3 carries S-palmitoyl cysteine lipidation. Disordered stretches follow at residues Asn-101–Val-168, Ala-380–Glu-598, Glu-802–Pro-821, Ala-860–Lys-1107, and Lys-1127–Ser-1279. The span at Phe-126–Val-168 shows a compositional bias: basic and acidic residues. A compositionally biased stretch (acidic residues) spans Ser-477–Ser-491. Basic and acidic residues-rich tracts occupy residues Leu-535–Phe-547 and Gly-580–Glu-598. The span at Ser-804–Glu-818 shows a compositional bias: acidic residues. Polar residues-rich tracts occupy residues Gly-886–Thr-901, Asp-913–Glu-925, and Thr-955–Leu-965. The segment covering Phe-972–Leu-990 has biased composition (basic and acidic residues). Over residues Arg-1047 to Ala-1062 the composition is skewed to polar residues. Residues Pro-1076–Arg-1090 are compositionally biased toward low complexity. Residues Gly-1091–Asp-1100 show a composition bias toward basic and acidic residues. Positions Trp-1226–Arg-1241 are enriched in polar residues. Over residues Arg-1259–Ser-1279 the composition is skewed to basic and acidic residues.

Specifically expressed in retina.

The protein localises to the cell projection. It is found in the cilium. Its subcellular location is the photoreceptor outer segment. The protein resides in the photoreceptor inner segment. Plays an essential role for normal photoreceptor cell maintenance and vision. The chain is Photoreceptor cilium actin regulator from Mus musculus (Mouse).